Consider the following 1335-residue polypeptide: Regulatory-associated protein of mTOR (1335 aa).

Phosphoserine occurs at positions 44 and 122. Position 696 is a phosphoserine; by MAPK8 (S696). Residue T700 is glycosylated (O-linked (GlcNAc) threonine). T706 bears the Phosphothreonine; by MAPK8 mark. Phosphoserine; by RPS6KA1 occurs at positions 719 and 721. At S722 the chain carries Phosphoserine; by AMPK and RPS6KA1. The residue at position 738 (S738) is a Phosphoserine. S791 is subject to Phosphoserine; by PKA. S792 bears the Phosphoserine; by AMPK mark. S836 and S855 each carry phosphoserine. The segment at 850–943 (VLDTSSLTQS…PEQTADDADD (94 aa)) is disordered. The segment covering 851–866 (LDTSSLTQSAPASPTN) has biased composition (polar residues). Phosphoserine; by MTOR is present on S859. S863 carries the phosphoserine; by MAPK8, MTOR and NLK modification. Position 865 is a phosphothreonine (T865). Positions 874-887 (AGGSPPASSTSSSS) are enriched in low complexity. Phosphoserine; by TBK1 is present on S877. Residues K932 and K948 each participate in a glycyl lysine isopeptide (Lys-Gly) (interchain with G-Cter in ubiquitin) cross-link. S982 carries the phosphoserine modification. 7 WD repeats span residues 1020–1061 (NRNP…DYFH), 1065–1106 (PRYT…EKNP), 1121–1160 (TTRGAGMVVDWEQETGLLMSSGDVRIVRIWDTDREMKVQD), 1164–1203 (GADSCVTSLSCDSHRSLIVAGLGDGSIRVYDRRMALSECR), 1209–1249 (EHTA…SVNV), 1251–1291 (QIVK…NNIK), and 1299–1335 (QRVGAISCLAFHPHWPHLAVGSNDYYISVYSVEKRVR). At K1097 the chain carries N6-acetyllysine.

Belongs to the WD repeat RAPTOR family. In terms of assembly, part of the mechanistic target of rapamycin complex 1 (mTORC1) which contains MTOR, MLST8 and RPTOR. mTORC1 associates with AKT1S1/PRAS40, which inhibits its activity. mTORC1 associates with DEPTOR, which regulates its activity. mTORC1 binds to and is inhibited by FKBP12-rapamycin. Forms a complex with MTOR under both leucine-rich and -poor conditions. Interacts with (via TOS motifs) EIF4EBP1 and RPS6KB1; interaction is independent of its association with MTOR. Binds preferentially to poorly or non-phosphorylated forms of EIF4EBP1, and this binding is critical to the ability of MTOR to catalyze phosphorylation. Interacts with ULK1 in a nutrient-dependent manner; the interaction is reduced during starvation. Interacts with GTP-bound form of RagA/RRAGA or RagB/RRAGB and GDP-bound form of RagC/RRAGC or RagD/RRAGD, promoting recruitment of mTORC1 to the lysosomes. Interacts (when phosphorylated by AMPK) with 14-3-3 protein, leading to inhibition of its activity. Interacts with SPAG5; SPAG5 competes with MTOR for RPTOR-binding, resulting in decreased mTORC1 formation. Interacts with WAC; WAC positively regulates MTOR activity by promoting the assembly of the TTT complex composed of TELO2, TTI1 and TTI2 and the RUVBL complex composed of RUVBL1 and RUVBL2 into the TTT-RUVBL complex which leads to the dimerization of the mTORC1 complex and its subsequent activation. Interacts with G3BP1. The complex formed with G3BP1 and SPAG5 is increased by oxidative stress. Interacts with HTR6. Interacts with PIH1D1. Interacts with LARP1. Interacts with BRAT1. Interacts with SIK3. Interacts with SLC38A7; this interaction mediates the recruitment of mTORC1 to the lysosome and its subsequent activation. As to quaternary structure, (Microbial infection) Interacts with vaccinia virus protein F17; this interaction dysregulates mTOR. Post-translationally, insulin-stimulated phosphorylation at Ser-863 by MTOR and MAPK8 regulates mTORC1 activity. Phosphorylated at Ser-863 by NLK in response to stress, disrupting the interaction with small GTPases Rag (RagA/RRAGA, RagB/RRAGB, RagC/RRAGC and/or RagD/RRAGD), thereby preventing lysosome recruitment and activation of the mTORC1 complex. Osmotic stress also induces phosphorylation at Ser-696, Thr-706 and Ser-863 by MAPK8. Ser-863 phosphorylation is required for phosphorylation at Ser-855 and Ser-859. In response to nutrient limitation, phosphorylated at Ser-722 and Ser-792 by AMPK; phosphorylation promotes interaction with 14-3-3 proteins, leading to negative regulation of the mTORC1 complex. Phosphorylation at Ser-722 and Ser-792 by AMPK in response to glucose starvation inhibits O-GlcNAcylation by OGT and subsequent activation of mTORC1. In response to growth factors, phosphorylated at Ser-719, Ser-721 and Ser-722 by RPS6KA1, which stimulates mTORC1 activity. Phosphorylation at Ser-791 by PKA downstream of cAMP inhibits the mTORC1 complex. Phosphorylated at Ser-877 by TBK1, leading to negative regulation of the mTORC1 complex. O-GlcNAcylated by OGT upon glucose sufficiency, promoting interaction with small GTPases Rag (RagA/RRAGA, RagB/RRAGB, RagC/RRAGC and/or RagD/RRAGD) and subsequent recruitment of mTORC1 to lysosomal membranes, leading to activation of the mTORC1 complex. Phosphorylation at Ser-722 and Ser-792 by AMPK in response to glucose starvation inhibits O-GlcNAcylation. In terms of processing, acetylation at Lys-1097 by EP300/p300 in response to leucine metabolite acetyl-coA promotes its activity, leading to activation of the mTORC1 complex. Acetylation is decreased in response to fasting. Post-translationally, ubiquitinated, leading to its degradation by the proteasome. Deubiquitinated by OTUB1 via a non-catalytic mechanism. Ubiquitinated by an E3 ubiquitin ligase complex containing VHL. As to expression, highly expressed in skeletal muscle, and in a lesser extent in brain, lung, small intestine, kidney and placenta. Widely expressed, with highest levels in nasal mucosa and pituitary and lowest in spleen.

The protein localises to the lysosome membrane. It is found in the cytoplasm. The protein resides in the cytoplasmic granule. Component of the mechanistic target of rapamycin complex 1 (mTORC1), an evolutionarily conserved central nutrient sensor that stimulates anabolic reactions and macromolecule biosynthesis to promote cellular biomass generation and growth. In response to nutrients, growth factors or amino acids, mTORC1 is recruited to the lysosome membrane and promotes protein, lipid and nucleotide synthesis by phosphorylating several substrates, such as ribosomal protein S6 kinase (RPS6KB1 and RPS6KB2) and EIF4EBP1 (4E-BP1). In the same time, it inhibits catabolic pathways by phosphorylating the autophagy initiation components ULK1 and ATG13, as well as transcription factor TFEB, a master regulators of lysosomal biogenesis and autophagy. The mTORC1 complex is inhibited in response to starvation and amino acid depletion. Within the mTORC1 complex, RPTOR acts both as a molecular adapter, which (1) mediates recruitment of mTORC1 to lysosomal membranes via interaction with small GTPases Rag (RagA/RRAGA, RagB/RRAGB, RagC/RRAGC and/or RagD/RRAGD), and a (2) substrate-specific adapter, which promotes substrate specificity by binding to TOS motif-containing proteins and direct them towards the active site of the MTOR kinase domain for phosphorylation. mTORC1 complex regulates many cellular processes, such as odontoblast and osteoclast differentiation or neuronal transmission. mTORC1 complex in excitatory neuronal transmission is required for the prosocial behavior induced by the psychoactive substance lysergic acid diethylamide (LSD). This Homo sapiens (Human) protein is Regulatory-associated protein of mTOR.